A 61-amino-acid chain; its full sequence is Large ribosomal subunit protein uL30 (61 aa).

This sequence belongs to the universal ribosomal protein uL30 family. In terms of assembly, part of the 50S ribosomal subunit.

The polypeptide is Large ribosomal subunit protein uL30 (Nitrosomonas eutropha (strain DSM 101675 / C91 / Nm57)).